A 238-amino-acid polypeptide reads, in one-letter code: Outer membrane protein A (238 aa).

5 beta stranded membrane passes run 1 to 8, 13 to 21, 43 to 52, 57 to 64, and 83 to 91; these read LTAKLGYP, LDIYTRLGG, PVFAGGVEYA, IATRLEYQ, and LLSVGVSYR. 3 tandem repeats follow at residues 104-105, 106-107, and 108-109. Residues 104 to 109 form a 3 X 2 AA tandem repeats of A-P region; that stretch reads APAPAP. One can recognise an OmpA-like domain in the interval 111–238; the sequence is VQTKHFTLKS…RRVEIEVKGI (128 aa). Residues C212 and C224 are joined by a disulfide bond.

Belongs to the outer membrane OOP (TC 1.B.6) superfamily. OmpA family. Monomer and homodimer.

It localises to the cell outer membrane. Functionally, with TolR probably plays a role in maintaining the position of the peptidoglycan cell wall in the periplasm. Acts as a porin with low permeability that allows slow penetration of small solutes; an internal gate slows down solute passage. The polypeptide is Outer membrane protein A (Citrobacter freundii).